A 253-amino-acid polypeptide reads, in one-letter code: Adenosylcobinamide-GDP ribazoletransferase (253 aa).

The next 4 membrane-spanning stretches (helical) occupy residues 33-53 (ISPL…YVLL), 106-126 (IGSG…VALL), 132-152 (FYTI…GLYI), and 178-198 (VLLL…FLVF).

It belongs to the CobS family. Requires Mg(2+) as cofactor.

The protein localises to the cell membrane. The enzyme catalyses alpha-ribazole + adenosylcob(III)inamide-GDP = adenosylcob(III)alamin + GMP + H(+). It catalyses the reaction alpha-ribazole 5'-phosphate + adenosylcob(III)inamide-GDP = adenosylcob(III)alamin 5'-phosphate + GMP + H(+). The protein operates within cofactor biosynthesis; adenosylcobalamin biosynthesis; adenosylcobalamin from cob(II)yrinate a,c-diamide: step 7/7. Functionally, joins adenosylcobinamide-GDP and alpha-ribazole to generate adenosylcobalamin (Ado-cobalamin). Also synthesizes adenosylcobalamin 5'-phosphate from adenosylcobinamide-GDP and alpha-ribazole 5'-phosphate. In Saccharolobus islandicus (strain Y.G.57.14 / Yellowstone #1) (Sulfolobus islandicus), this protein is Adenosylcobinamide-GDP ribazoletransferase.